The chain runs to 365 residues: MTLNKVPASEYRRILVNDHPIMDARAPVEFEKGAFPASVNHPLMEDEERKKVGTCYKEHGQETAIKLGHSLVQGEIKQQRVDAWLDFFTKNPDGYLYCFRGGLRSQLTQQWLKEAGLDIPFIEGGYKAMRQFLIETIDNAANVKPMLILSGITGSGKTDFLLQRKEAVDLEGIAHHRGSSFGRYHEGQPSQINFENALAVALLKHQDTDAKHLLLEDESFLIGRSALPQAFYSGMQTASVLVLEESMDARLTRLLNEYVHKMHSGYIQRLGEEAGFEAFAQYLAQSITGIKKRLGGKQHDELQAMITDALSIQTSQNDTRGHLGWIELLLVKYYDPMYQYQIDKKAERILFKGDHQAMHQWLDDH.

The region spanning 15–138 (LVNDHPIMDA…MRQFLIETID (124 aa)) is the Rhodanese domain. The active-site S-selanylcysteine intermediate is the cysteine 98.

Belongs to the SelU family. As to quaternary structure, monomer.

It carries out the reaction 5-methylaminomethyl-2-thiouridine(34) in tRNA + selenophosphate + (2E)-geranyl diphosphate + H2O + H(+) = 5-methylaminomethyl-2-selenouridine(34) in tRNA + (2E)-thiogeraniol + phosphate + diphosphate. The catalysed reaction is 5-methylaminomethyl-2-thiouridine(34) in tRNA + (2E)-geranyl diphosphate = 5-methylaminomethyl-S-(2E)-geranyl-thiouridine(34) in tRNA + diphosphate. It catalyses the reaction 5-methylaminomethyl-S-(2E)-geranyl-thiouridine(34) in tRNA + selenophosphate + H(+) = 5-methylaminomethyl-2-(Se-phospho)selenouridine(34) in tRNA + (2E)-thiogeraniol. The enzyme catalyses 5-methylaminomethyl-2-(Se-phospho)selenouridine(34) in tRNA + H2O = 5-methylaminomethyl-2-selenouridine(34) in tRNA + phosphate. Involved in the post-transcriptional modification of the uridine at the wobble position (U34) of tRNA(Lys), tRNA(Glu) and tRNA(Gln). Catalyzes the conversion of 2-thiouridine (S2U-RNA) to 2-selenouridine (Se2U-RNA). Acts in a two-step process involving geranylation of 2-thiouridine (S2U) to S-geranyl-2-thiouridine (geS2U) and subsequent selenation of the latter derivative to 2-selenouridine (Se2U) in the tRNA chain. The sequence is that of tRNA 2-selenouridine synthase from Shewanella pealeana (strain ATCC 700345 / ANG-SQ1).